A 317-amino-acid chain; its full sequence is Melanocyte-stimulating hormone receptor (317 aa).

Residues 1–37 (MPIHGAPRKLLGSLNSTPTATPKLGLAANHTGAPCLE) lie on the Extracellular side of the membrane. A glycan (N-linked (GlcNAc...) asparagine) is linked at Asn29. The helical transmembrane segment at 38-63 (VSIPDGLFLSLGLVSLVENVLVVAAI) threads the bilayer. Over 64 to 72 (AKNRNLHSP) the chain is Cytoplasmic. A helical membrane pass occupies residues 73 to 93 (MYCFICCLALSDLLVSGSNML). Over 94-118 (EMAVVLLLEGGALATRASVVQQLHN) the chain is Extracellular. The helical transmembrane segment at 119 to 140 (TIDVLTCSSMLCSLCFLGAIAV) threads the bilayer. At 141 to 163 (DRHISIFYALRYHSIMTLPRAQR) the chain is on the cytoplasmic side. Residues 164–183 (VIAAIWVASILSSTLFITYY) traverse the membrane as a helical segment. Residues 184 to 191 (DHAAVLLC) lie on the Extracellular side of the membrane. The chain crosses the membrane as a helical span at residues 192–211 (LVVFFLAMLVLMAVLYVHML). At 212–240 (ARACQHAQGITRLHKRQPPAHQGFGLRGA) the chain is on the cytoplasmic side. A helical membrane pass occupies residues 241 to 266 (ATLTILLGIFFLCWGPFFLHLKLVVF). The Extracellular segment spans residues 267–279 (CPQHLTCSCIFKN). Residues 280 to 300 (FKVFLTLIICNTIIDPLIYAF) form a helical membrane-spanning segment. At 301–317 (RSQELRRTLKEVLLCSW) the chain is on the cytoplasmic side. A lipid anchor (S-palmitoyl cysteine) is attached at Cys315.

It belongs to the G-protein coupled receptor 1 family. In terms of assembly, interacts with MGRN1, but does not undergo MGRN1-mediated ubiquitination; this interaction competes with GNAS-binding and thus inhibits agonist-induced cAMP production. Interacts with OPN3; the interaction results in a decrease in MC1R-mediated cAMP signaling and ultimately a decrease in melanin production in melanocytes.

It is found in the cell membrane. In terms of biological role, receptor for MSH (alpha, beta and gamma) and ACTH. The activity of this receptor is mediated by G proteins which activate adenylate cyclase. Mediates melanogenesis, the production of eumelanin (black/brown) and phaeomelanin (red/yellow), via regulation of cAMP signaling in melanocytes. The protein is Melanocyte-stimulating hormone receptor (MC1R) of Saimiri oerstedii (Central American squirrel monkey).